Consider the following 247-residue polypeptide: DNA polymerase sliding clamp (247 aa).

Belongs to the PCNA family. In terms of assembly, homotrimer. The subunits circularize to form a toroid; DNA passes through its center. Replication factor C (RFC) is required to load the toroid on the DNA.

Its function is as follows. Sliding clamp subunit that acts as a moving platform for DNA processing. Responsible for tethering the catalytic subunit of DNA polymerase and other proteins to DNA during high-speed replication. This is DNA polymerase sliding clamp from Methanospirillum hungatei JF-1 (strain ATCC 27890 / DSM 864 / NBRC 100397 / JF-1).